Consider the following 277-residue polypeptide: MEMO1 family protein CTN_0605 (277 aa).

This sequence belongs to the MEMO1 family.

The chain is MEMO1 family protein CTN_0605 from Thermotoga neapolitana (strain ATCC 49049 / DSM 4359 / NBRC 107923 / NS-E).